The sequence spans 317 residues: 3'-5' exoribonuclease YhaM (317 aa).

Residues 17 to 90 (FLLIKESTRG…QLKILSIRLS (74 aa)) constitute a DNA-binding region (OB). One can recognise an HD domain in the interval 163–279 (HVVSMLAIGK…LHLIDLIDAK (117 aa)).

Belongs to the YhaM family.

Functionally, shows a 3'-5' exoribonuclease activity. In Oceanobacillus iheyensis (strain DSM 14371 / CIP 107618 / JCM 11309 / KCTC 3954 / HTE831), this protein is 3'-5' exoribonuclease YhaM.